Here is a 474-residue protein sequence, read N- to C-terminus: Iroquois-class homeodomain protein irx-5 (474 aa).

The homeobox; TALE-type DNA-binding region spans D109–N171. 3 disordered regions span residues T174–G222, E252–L294, and S453–I474. Over residues E182 to D199 the composition is skewed to acidic residues. The span at P263–Q273 shows a compositional bias: pro residues.

It belongs to the TALE/IRO homeobox family. In terms of tissue distribution, early in gastrulation, expressed in cells beneath the blastopore lip. Subsequently expressed in the neural plate in overlapping patterns with other irx members, which all share an anterior border of expression. At the time of neural tube closure (stage 19) in regions of the midbrain, hindbrain, neural tube and optic vesicle, where expression continues during tailbud stages. In stage 34, expressed throughout the eye retina. Does not appear to be expressed in the developing heart or pronephros.

It is found in the nucleus. In terms of biological role, acts partially redundantly with other irx members in neural patterning. Required for formation of the posterior forebrain, midbrain, hindbrain, and to a lesser extent, spinal cord. Patterns the neuroectoderm in both the anterior/posterior and dorsal/ventral axes. Does not appear to play a role in pronephros kidney development. Involved in craniofacial and gonadal development. Modulates the migration of progenitor cell populations in branchial arches and gonads by repressing CXCL12. The protein is Iroquois-class homeodomain protein irx-5 (irx5) of Xenopus laevis (African clawed frog).